Reading from the N-terminus, the 387-residue chain is L-aspartate:5-guanidino-3-methyl-2-oxopentanoate transaminase (387 aa).

At Lys-237 the chain carries N6-(pyridoxal phosphate)lysine.

Belongs to the class-I pyridoxal-phosphate-dependent aminotransferase family. Pyridoxal 5'-phosphate serves as cofactor.

The enzyme catalyses (3R)-5-guanidino-3-methyl-2-oxopentanoate + L-aspartate = (3R)-3-methyl-L-arginine + oxaloacetate. The protein operates within antibiotic biosynthesis. Aminotransferase involved in the formation of the rare amino acid 3-methylarginine (MeArg), which is used as a potent antibiotic against the closely related soybean pathogen P.syringae pv. glycinea. Probably catalyzes transamination from the donor L-aspartate to 5-guanidino-3-methyl-2-oxopentanoic acid, generating 3-methylarginine. In Pseudomonas syringae pv. syringae, this protein is L-aspartate:5-guanidino-3-methyl-2-oxopentanoate transaminase.